The chain runs to 172 residues: Nascent polypeptide-associated complex subunit beta (172 aa).

2 disordered regions span residues 36 to 58 (KTGK…GDDK) and 142 to 172 (QNMQ…DKVE). The span at 41 to 50 (TPRRKMKRAP) shows a compositional bias: basic residues. Positions 54–119 (GGDDKKLQQT…GEDKELTELV (66 aa)) constitute an NAC-A/B domain.

It belongs to the NAC-beta family. In terms of assembly, part of the nascent polypeptide-associated complex (NAC), consisting of EGD2 and EGD1. NAC associates with ribosomes via EGD1.

It is found in the cytoplasm. The protein localises to the nucleus. Its function is as follows. Component of the nascent polypeptide-associated complex (NAC), a dynamic component of the ribosomal exit tunnel, protecting the emerging polypeptides from interaction with other cytoplasmic proteins to ensure appropriate nascent protein targeting. The NAC complex also promotes mitochondrial protein import by enhancing productive ribosome interactions with the outer mitochondrial membrane and blocks the inappropriate interaction of ribosomes translating non-secretory nascent polypeptides with translocation sites in the membrane of the endoplasmic reticulum. EGD1 may act as a transcription factor that exert a negative effect on the expression of several genes that are transcribed by RNA polymerase II. This Pyricularia oryzae (strain 70-15 / ATCC MYA-4617 / FGSC 8958) (Rice blast fungus) protein is Nascent polypeptide-associated complex subunit beta (EGD1).